Consider the following 94-residue polypeptide: Small ribosomal subunit protein uS19 (94 aa).

This sequence belongs to the universal ribosomal protein uS19 family.

Functionally, protein S19 forms a complex with S13 that binds strongly to the 16S ribosomal RNA. This Natranaerobius thermophilus (strain ATCC BAA-1301 / DSM 18059 / JW/NM-WN-LF) protein is Small ribosomal subunit protein uS19.